A 557-amino-acid chain; its full sequence is Dihydroxy-acid dehydratase (557 aa).

D78 is a Mg(2+) binding site. C119 serves as a coordination point for [2Fe-2S] cluster. Mg(2+)-binding residues include D120 and K121. K121 bears the N6-carboxylysine mark. Residue C194 participates in [2Fe-2S] cluster binding. E446 is a binding site for Mg(2+). S472 functions as the Proton acceptor in the catalytic mechanism.

This sequence belongs to the IlvD/Edd family. In terms of assembly, homodimer. [2Fe-2S] cluster is required as a cofactor. Requires Mg(2+) as cofactor.

The enzyme catalyses (2R)-2,3-dihydroxy-3-methylbutanoate = 3-methyl-2-oxobutanoate + H2O. It carries out the reaction (2R,3R)-2,3-dihydroxy-3-methylpentanoate = (S)-3-methyl-2-oxopentanoate + H2O. Its pathway is amino-acid biosynthesis; L-isoleucine biosynthesis; L-isoleucine from 2-oxobutanoate: step 3/4. The protein operates within amino-acid biosynthesis; L-valine biosynthesis; L-valine from pyruvate: step 3/4. Functions in the biosynthesis of branched-chain amino acids. Catalyzes the dehydration of (2R,3R)-2,3-dihydroxy-3-methylpentanoate (2,3-dihydroxy-3-methylvalerate) into 2-oxo-3-methylpentanoate (2-oxo-3-methylvalerate) and of (2R)-2,3-dihydroxy-3-methylbutanoate (2,3-dihydroxyisovalerate) into 2-oxo-3-methylbutanoate (2-oxoisovalerate), the penultimate precursor to L-isoleucine and L-valine, respectively. The polypeptide is Dihydroxy-acid dehydratase (Desulfosudis oleivorans (strain DSM 6200 / JCM 39069 / Hxd3) (Desulfococcus oleovorans)).